The primary structure comprises 256 residues: Adenosylcobinamide-GDP ribazoletransferase (256 aa).

Helical transmembrane passes span 40–60, 64–84, 114–134, 143–163, 194–214, and 234–254; these read YFPL…WLVL, PAQG…TGAF, IGAF…QLLS, ILVA…SHLL, VVPL…GLIL, and CLGM…LAWM.

The protein belongs to the CobS family. Requires Mg(2+) as cofactor.

Its subcellular location is the cell inner membrane. The catalysed reaction is alpha-ribazole + adenosylcob(III)inamide-GDP = adenosylcob(III)alamin + GMP + H(+). The enzyme catalyses alpha-ribazole 5'-phosphate + adenosylcob(III)inamide-GDP = adenosylcob(III)alamin 5'-phosphate + GMP + H(+). The protein operates within cofactor biosynthesis; adenosylcobalamin biosynthesis; adenosylcobalamin from cob(II)yrinate a,c-diamide: step 7/7. In terms of biological role, joins adenosylcobinamide-GDP and alpha-ribazole to generate adenosylcobalamin (Ado-cobalamin). Also synthesizes adenosylcobalamin 5'-phosphate from adenosylcobinamide-GDP and alpha-ribazole 5'-phosphate. In Ralstonia pickettii (strain 12J), this protein is Adenosylcobinamide-GDP ribazoletransferase.